The following is a 142-amino-acid chain: Hemoglobin subunit alpha-2 (142 aa).

A Globin domain is found at 2–142 (LLTADDKKHI…VSSVLTSKYR (141 aa)). His-59 contributes to the O2 binding site. Position 88 (His-88) interacts with heme b.

The protein belongs to the globin family. In terms of assembly, heterotetramer of two alpha chains and two beta chains. Red blood cells.

Its function is as follows. Involved in oxygen transport from the lung to the various peripheral tissues. In Xenopus borealis (Kenyan clawed frog), this protein is Hemoglobin subunit alpha-2 (hba2).